Consider the following 717-residue polypeptide: uncharacterized protein (717 aa).

The protein belongs to the asfivirus C717R family.

It is found in the virion. This is an uncharacterized protein from Ornithodoros (relapsing fever ticks).